The following is a 276-amino-acid chain: Ribonuclease 3 (276 aa).

The interval 1 to 29 is disordered; the sequence is MRGTVSVPKKAEDAKADPPAKKKADTQAS. A compositionally biased stretch (basic and acidic residues) spans 9–25; that stretch reads KKAEDAKADPPAKKKAD. In terms of domain architecture, RNase III spans 31–157; it reads HTLLEGRLGY…VIGAVYLDQG (127 aa). A Mg(2+)-binding site is contributed by Glu-70. The active site involves Asp-74. Positions 143 and 146 each coordinate Mg(2+). Glu-146 is an active-site residue. Residues 184–252 form the DRBM domain; it reads DWKTSLQELT…AESAWRSIRA (69 aa). A disordered region spans residues 227 to 276; that stretch reads YGTGTGRSKKEAEQQAAESAWRSIRAAADERAKATADAVDADPDEASASA. Over residues 265-276 the composition is skewed to acidic residues; sequence VDADPDEASASA.

Belongs to the ribonuclease III family. As to quaternary structure, homodimer. The cofactor is Mg(2+).

The protein localises to the cytoplasm. It carries out the reaction Endonucleolytic cleavage to 5'-phosphomonoester.. Its function is as follows. Digests double-stranded RNA. Involved in the processing of primary rRNA transcript to yield the immediate precursors to the large and small rRNAs (23S and 16S). Also processes some mRNAs, and tRNAs when they are encoded in the rRNA operon. May modulate key aspects of gene expression as its absence has extensive effects on the abundance of about 200 different transcripts. Probably processes pre-crRNA and tracrRNA of type II CRISPR loci if present in the organism. This Streptomyces coelicolor (strain ATCC BAA-471 / A3(2) / M145) protein is Ribonuclease 3 (rnc).